A 128-amino-acid chain; its full sequence is Large-conductance mechanosensitive channel (128 aa).

The next 2 membrane-spanning stretches (helical) occupy residues 10 to 30 and 76 to 96; these read FAMRGNVVDMAVGVIIGGAFG and GLFIQNVFDFIIIAFAIFMMV.

Belongs to the MscL family. In terms of assembly, homopentamer.

The protein localises to the cell inner membrane. Functionally, channel that opens in response to stretch forces in the membrane lipid bilayer. May participate in the regulation of osmotic pressure changes within the cell. This is Large-conductance mechanosensitive channel from Mannheimia succiniciproducens (strain KCTC 0769BP / MBEL55E).